Reading from the N-terminus, the 467-residue chain is 3-isopropylmalate dehydratase large subunit (467 aa).

Residues Cys-349, Cys-409, and Cys-412 each contribute to the [4Fe-4S] cluster site.

This sequence belongs to the aconitase/IPM isomerase family. LeuC type 1 subfamily. As to quaternary structure, heterodimer of LeuC and LeuD. [4Fe-4S] cluster is required as a cofactor.

The catalysed reaction is (2R,3S)-3-isopropylmalate = (2S)-2-isopropylmalate. The protein operates within amino-acid biosynthesis; L-leucine biosynthesis; L-leucine from 3-methyl-2-oxobutanoate: step 2/4. Its function is as follows. Catalyzes the isomerization between 2-isopropylmalate and 3-isopropylmalate, via the formation of 2-isopropylmaleate. In Ruegeria sp. (strain TM1040) (Silicibacter sp.), this protein is 3-isopropylmalate dehydratase large subunit.